Here is a 207-residue protein sequence, read N- to C-terminus: Ubiquitin-conjugating enzyme E2 E3 (207 aa).

Over residues 1–10 (MSSDRQRSDD) the composition is skewed to basic and acidic residues. Positions 1 to 63 (MSSDRQRSDD…KTTAKLSTSA (63 aa)) are disordered. At Ser2 the chain carries N-acetylserine. Phosphoserine is present on Ser8. A compositionally biased stretch (low complexity) spans 50–63 (KLSSKTTAKLSTSA). One can recognise a UBC core domain in the interval 61 to 207 (TSAKRIQKEL…ARQWTKRYAT (147 aa)). Cys145 (glycyl thioester intermediate) is an active-site residue.

This sequence belongs to the ubiquitin-conjugating enzyme family. In terms of assembly, the ubiquitin-loaded form interacts specifically with importin-11 (IPO11), leading to its import into the nucleus. Interacts with NEDD4L.

The protein resides in the nucleus. It is found in the cytoplasm. The enzyme catalyses S-ubiquitinyl-[E1 ubiquitin-activating enzyme]-L-cysteine + [E2 ubiquitin-conjugating enzyme]-L-cysteine = [E1 ubiquitin-activating enzyme]-L-cysteine + S-ubiquitinyl-[E2 ubiquitin-conjugating enzyme]-L-cysteine.. Its pathway is protein modification; protein ubiquitination. Its function is as follows. Accepts ubiquitin from the E1 complex and catalyzes its covalent attachment to other proteins. In vitro catalyzes 'Lys-11'- and 'Lys-48'-, as well as 'Lys-63'-linked polyubiquitination. Participates in the regulation of transepithelial sodium transport in renal cells. This Bos taurus (Bovine) protein is Ubiquitin-conjugating enzyme E2 E3 (UBE2E3).